Consider the following 676-residue polypeptide: F420-dependent formate dehydrogenase 2 subunit alpha (676 aa).

Residues 4-60 (FKVVHTICPYCGTGCGIDLVVKDGKVVDSHPFKRHPVNEGKVCIKGNYCYEFVHSED) form the 4Fe-4S Mo/W bis-MGD-type domain. Residues Cys11, Cys14, Cys18, and Cys46 each contribute to the [4Fe-4S] cluster site. Residue Sec133 is a non-standard amino acid, selenocysteine.

It belongs to the prokaryotic molybdopterin-containing oxidoreductase family. As to quaternary structure, dimer of an alpha (FdhA2) and a beta (FdhB2) subunit. Requires [4Fe-4S] cluster as cofactor. The cofactor is Mo-bis(molybdopterin guanine dinucleotide). It depends on Zn(2+) as a cofactor.

The enzyme catalyses oxidized coenzyme F420-(gamma-L-Glu)(n) + formate + 2 H(+) = reduced coenzyme F420-(gamma-L-Glu)(n) + CO2. Catalyzes the oxidation of formate to carbon dioxide, with coenzyme F420 as the electron acceptor. In vitro can also use methyl viologen as electron acceptor. This is F420-dependent formate dehydrogenase 2 subunit alpha from Methanococcus maripaludis (strain DSM 14266 / JCM 13030 / NBRC 101832 / S2 / LL).